Here is a 310-residue protein sequence, read N- to C-terminus: Deoxyribonuclease gamma (310 aa).

A signal peptide spans 1–25; it reads MSLYPASPYLASLLLFILALHGALS. The Bipartite nuclear localization signal motif lies at 40–56; the sequence is KKENHNAMDIIVKIIKR. Residues Glu-105 and His-160 contribute to the active site. The cysteines at positions 199 and 236 are disulfide-linked. Residues 289-310 form a not required for free DNA-nuclease activity but required for activity towards liposome-coated DNA region; it reads SRAFTNSRKSVSLKKKKKGSRS. Positions 301–307 match the Nuclear localization signal motif; the sequence is LKKKKKG.

This sequence belongs to the DNase I family. In terms of assembly, monomer. The cofactor is Ca(2+). It depends on Mg(2+) as a cofactor. In terms of processing, seems to be synthesized as an inactive precursor protein and converted into an active mature enzyme by removal of the N-terminal precursor peptide during apoptosis. Poly-ADP-ribosylated by PARP1. ADP-ribosylation negatively regulates enzymatic activity during apoptosis. In terms of tissue distribution, detected at high levels in spleen, lymph nodes, thymus and liver. Observed also in kidney and testis, but not in brain or heart.

Its subcellular location is the nucleus. It is found in the secreted. Its activity is regulated as follows. Inhibited by zinc. Has DNA hydrolytic activity. Is capable of both single- and double-stranded DNA cleavage, producing DNA fragments with 3'-OH ends. Can cleave chromatin to nucleosomal units and cleaves nucleosomal and liposome-coated DNA. Acts in internucleosomal DNA fragmentation (INDF) during apoptosis and necrosis. The role in apoptosis includes myogenic and neuronal differentiation, and BCR-mediated clonal deletion of self-reactive B cells. Is active on chromatin in apoptotic cell-derived membrane-coated microparticles and thus suppresses anti-DNA autoimmunity. Together with DNASE1, plays a key role in degrading neutrophil extracellular traps (NETs). NETs are mainly composed of DNA fibers and are released by neutrophils to bind pathogens during inflammation. Degradation of intravascular NETs by DNASE1 and DNASE1L3 is required to prevent formation of clots that obstruct blood vessels and cause organ damage following inflammation. The polypeptide is Deoxyribonuclease gamma (Dnase1l3) (Rattus norvegicus (Rat)).